The primary structure comprises 372 residues: Cyclin-dependent kinase 9 (372 aa).

The 297-residue stretch at 19 to 315 (YEKLAKIGQG…SDDALNHDFF (297 aa)) folds into the Protein kinase domain. 25 to 33 (IGQGTFGEV) is an ATP binding site. K44 bears the N6-acetyllysine; by EP300/CBP, PCAF/KAT2B and GCN5/KAT2A mark. Residues K48 and 104–106 (DFC) contribute to the ATP site. Residue K48 is modified to N6-acetyllysine; by PCAF/KAT2B and GCN5/KAT2A. D149 serves as the catalytic Proton acceptor. A T-loop region spans residues 166-191 (ADFGLARAFSLAKNSQPNRYTNRVVT). D167 is a binding site for ATP. S175 carries the post-translational modification Phosphoserine. At T186 the chain carries Phosphothreonine; by CaMK1D. Residues 343–372 (RRKGSQITQQSTNQSRNPATTNQTEFERVF) are disordered. Position 347 is a phosphoserine; by CDK9 and PKA (S347). Over residues 347–366 (SQITQQSTNQSRNPATTNQT) the composition is skewed to polar residues. T350 is modified (phosphothreonine; by CDK9). At S353 the chain carries Phosphoserine; by CDK9. T354 carries the phosphothreonine; by CDK9 modification. Phosphoserine; by CDK9 is present on S357. A phosphothreonine; by CDK9 mark is found at T362 and T363.

The protein belongs to the protein kinase superfamily. CMGC Ser/Thr protein kinase family. CDC2/CDKX subfamily. As to quaternary structure, component of the super elongation complex (SEC), at least composed of EAF1, EAF2, CDK9, MLLT3/AF9, AFF (AFF1 or AFF4), the P-TEFb complex and ELL (ELL, ELL2 or ELL3). Associates with CCNT1/cyclin-T1, CCNT2/cyclin-T2 (isoform A and isoform B) or CCNK/cyclin-K to form active P-TEFb. P-TEFb forms a complex with AFF4/AF5Q31 and is part of the super elongation complex (SEC). Component of a complex which is composed of at least 5 members: HTATSF1/Tat-SF1, P-TEFb complex, RNA pol II, SUPT5H, and NCL/nucleolin. Associates with UBR5 and forms a transcription regulatory complex composed of CDK9, RNAP II, UBR5 and TFIIS/TCEA1 that can stimulate target gene transcription (e.g. gamma fibrinogen/FGG) by recruiting their promoters. Component of the 7SK snRNP inactive complex which is composed of at least 8 members: P-TEFb (composed of CDK9 and CCNT1/cyclin-T1), HEXIM1, HEXIM2, LARP7, BCDIN3, SART3 proteins and 7SK and U6 snRNAs. This inactive 7SK snRNP complex can also interact with NCOR1 and HDAC3, probably to regulate CDK9 acetylation. Release of P-TEFb from P-TEFb/7SK snRNP complex requires both PP2B to transduce calcium Ca(2+) signaling in response to stimuli (e.g. UV or hexamethylene bisacetamide (HMBA)), and PPP1CA to dephosphorylate Thr-186. This released P-TEFb remains inactive in the pre-initiation complex with BRD4 until new Thr-186 phosphorylation occurs after the synthesis of a short RNA. Interacts with BRD4; to target chromatin binding. Interacts with JMJD6. Interacts with activated nuclear STAT3 and RELA/p65. Binds to AR and MYOD1. Forms a complex composed of CDK9, CCNT1/cyclin-T1, EP300 and GATA4 that stimulates hypertrophy in cardiomyocytes. The large PER complex involved in the repression of transcriptional termination is composed of at least PER2, CDK9, DDX5, DHX9, NCBP1 and POLR2A. Interacts with HSF1. Interacts with TBX21. Interacts with WDR43. Interacts with ZMYND8; the association appears to occur between homodimeric ZMYND8 and the activated form of the P-TEFb complex. Post-translationally, autophosphorylation at Thr-186, Ser-347, Thr-350, Ser-353, Thr-354 and Ser-357 triggers kinase activity by promoting cyclin and substrate binding upon conformational changes. Thr-186 phosphorylation requires the calcium Ca(2+) signaling pathway, including CaMK1D and calmodulin. This inhibition is relieved by Thr-29 dephosphorylation. Phosphorylation at Ser-175 inhibits kinase activity. Can be phosphorylated on either Thr-362 or Thr-363 but not on both simultaneously. In terms of processing, dephosphorylation of Thr-186 by PPM1A and PPM1B blocks CDK9 activity and may lead to CDK9 proteasomal degradation. However, PPP1CA-mediated Thr-186 dephosphorylation is required to release P-TEFb from its inactive P-TEFb/7SK snRNP complex. Dephosphorylated at Ser-347 by the PNUTS-PP1 complex during RNA polymerase II transcription pause-release. Dephosphorylation of C-terminus Thr and Ser residues by protein phosphatase-1 (PP1) triggers CDK9 activity. N6-acetylation of Lys-44 promotes kinase activity, whereas acetylation of both Lys-44 and Lys-48 mediated by PCAF/KAT2B and GCN5/KAT2A reduces kinase activity. The acetylated form associates with PML bodies in the nuclear matrix and with the transcriptionally silent HIV-1 genome; deacetylated upon transcription stimulation. Deacetylated by SIRT7, promoting the kinase activity and subsequent 'Ser-2' phosphorylation of the C-terminal domain (CTD) of RNA polymerase II. Post-translationally, polyubiquitinated and thus activated by UBR5. This ubiquitination is promoted by TFIIS/TCEA1 and favors 'Ser-2' phosphorylation of RPB1/POLR2A CTD.

The protein localises to the nucleus. It is found in the cytoplasm. Its subcellular location is the PML body. It carries out the reaction L-seryl-[protein] + ATP = O-phospho-L-seryl-[protein] + ADP + H(+). It catalyses the reaction L-threonyl-[protein] + ATP = O-phospho-L-threonyl-[protein] + ADP + H(+). The catalysed reaction is [DNA-directed RNA polymerase] + ATP = phospho-[DNA-directed RNA polymerase] + ADP + H(+). With respect to regulation, activation by Thr-186 phosphorylation is calcium Ca(2+) signaling pathway-dependent; actively inactivated by dephosphorylation mediated by PPP1CA, PPM1A and PPM1B. Reversibly repressed by acetylation at Lys-44 and Lys-48. Its function is as follows. Protein kinase involved in the regulation of transcription. Member of the cyclin-dependent kinase pair (CDK9/cyclin-T) complex, also called positive transcription elongation factor b (P-TEFb), which facilitates the transition from abortive to productive elongation by phosphorylating the CTD (C-terminal domain) of the large subunit of RNA polymerase II (RNAP II) POLR2A, SUPT5H and RDBP. This complex is inactive when in the 7SK snRNP complex form. Phosphorylates EP300, MYOD1, RPB1/POLR2A and AR and the negative elongation factors DSIF and NELFE. Regulates cytokine inducible transcription networks by facilitating promoter recognition of target transcription factors (e.g. TNF-inducible RELA/p65 activation and IL-6-inducible STAT3 signaling). Promotes RNA synthesis in genetic programs for cell growth, differentiation and viral pathogenesis. P-TEFb is also involved in cotranscriptional histone modification, mRNA processing and mRNA export. Modulates a complex network of chromatin modifications including histone H2B monoubiquitination (H2Bub1), H3 lysine 4 trimethylation (H3K4me3) and H3K36me3; integrates phosphorylation during transcription with chromatin modifications to control co-transcriptional histone mRNA processing. The CDK9/cyclin-K complex has also a kinase activity towards CTD of RNAP II and can substitute for CDK9/cyclin-T P-TEFb in vitro. Replication stress response protein; the CDK9/cyclin-K complex is required for genome integrity maintenance, by promoting cell cycle recovery from replication arrest and limiting single-stranded DNA amount in response to replication stress, thus reducing the breakdown of stalled replication forks and avoiding DNA damage. In addition, probable function in DNA repair of isoform 2 via interaction with KU70/XRCC6. Promotes cardiac myocyte enlargement. RPB1/POLR2A phosphorylation on 'Ser-2' in CTD activates transcription. AR phosphorylation modulates AR transcription factor promoter selectivity and cell growth. DSIF and NELF phosphorylation promotes transcription by inhibiting their negative effect. The phosphorylation of MYOD1 enhances its transcriptional activity and thus promotes muscle differentiation. Catalyzes phosphorylation of KAT5, promoting KAT5 recruitment to chromatin and histone acetyltransferase activity. The sequence is that of Cyclin-dependent kinase 9 (CDK9) from Bos taurus (Bovine).